Reading from the N-terminus, the 210-residue chain is Large ribosomal subunit protein uL3 (210 aa).

The segment at 136-156 (THGTEKAHRSGGSIGNNTEPG) is disordered.

It belongs to the universal ribosomal protein uL3 family. Part of the 50S ribosomal subunit. Forms a cluster with proteins L14 and L19.

Functionally, one of the primary rRNA binding proteins, it binds directly near the 3'-end of the 23S rRNA, where it nucleates assembly of the 50S subunit. The protein is Large ribosomal subunit protein uL3 of Solidesulfovibrio magneticus (strain ATCC 700980 / DSM 13731 / RS-1) (Desulfovibrio magneticus).